Reading from the N-terminus, the 1482-residue chain is Chromosome partition protein MukB (1482 aa).

Residue 34–41 (GGNGAGKS) participates in ATP binding. 6 coiled-coil regions span residues 337 to 468 (LNLV…LSVA), 509 to 604 (QHLA…APIW), 780 to 805 (RAAR…ATLS), 835 to 1044 (EAEI…ELVD), 1070 to 1115 (TNRA…TAKA), and 1210 to 1265 (EAIE…LQAV). The flexible hinge stretch occupies residues 666-783 (PGGAEDQRLV…AVPLFGRAAR (118 aa)).

This sequence belongs to the SMC family. MukB subfamily. As to quaternary structure, homodimerization via its hinge domain. Binds to DNA via its C-terminal region. Interacts, and probably forms a ternary complex, with MukE and MukF via its C-terminal region. The complex formation is stimulated by calcium or magnesium. Interacts with tubulin-related protein FtsZ.

It is found in the cytoplasm. The protein localises to the nucleoid. Functionally, plays a central role in chromosome condensation, segregation and cell cycle progression. Functions as a homodimer, which is essential for chromosome partition. Involved in negative DNA supercoiling in vivo, and by this means organize and compact chromosomes. May achieve or facilitate chromosome segregation by condensation DNA from both sides of a centrally located replisome during cell division. The protein is Chromosome partition protein MukB of Serratia proteamaculans (strain 568).